A 220-amino-acid chain; its full sequence is Ras-related protein Rab-11B (220 aa).

18 to 25 serves as a coordination point for GTP; the sequence is GDSGVGKS. An Effector region motif is present at residues 40–48; it reads KLSTIGVEF. GTP is bound by residues 66-70 and 124-127; these read DTAGQ and NKSD. 2 S-geranylgeranyl cysteine lipidation sites follow: cysteine 219 and cysteine 220.

It belongs to the small GTPase superfamily. Rab family.

Its subcellular location is the cell membrane. This Dictyostelium discoideum (Social amoeba) protein is Ras-related protein Rab-11B (rab11B).